Consider the following 194-residue polypeptide: PRELI domain containing protein 3B (194 aa).

In terms of domain architecture, PRELI/MSF1 spans 1 to 172 (MKIWTSEHVF…VIHKLNAEIE (172 aa)). 2 positions are modified to phosphoserine: Ser46 and Ser51.

This sequence belongs to the slowmo family.

This chain is PRELI domain containing protein 3B (PRELID3B), found in Macaca fascicularis (Crab-eating macaque).